The chain runs to 876 residues: Alanine--tRNA ligase (876 aa).

At K74 the chain carries N6-acetyllysine. Zn(2+) is bound by residues H564, H568, C666, and H670.

It belongs to the class-II aminoacyl-tRNA synthetase family. Homotetramer. Requires Zn(2+) as cofactor.

It localises to the cytoplasm. The catalysed reaction is tRNA(Ala) + L-alanine + ATP = L-alanyl-tRNA(Ala) + AMP + diphosphate. Its function is as follows. Catalyzes the attachment of alanine to tRNA(Ala) in a two-step reaction: alanine is first activated by ATP to form Ala-AMP and then transferred to the acceptor end of tRNA(Ala). Also edits incorrectly charged Ser-tRNA(Ala) and Gly-tRNA(Ala) via its editing domain. The sequence is that of Alanine--tRNA ligase from Escherichia coli O6:K15:H31 (strain 536 / UPEC).